The sequence spans 136 residues: Peptide methionine sulfoxide reductase MsrB (136 aa).

The 123-residue stretch at 13–135 (ENDWRSKLTP…NSASLDFKDK (123 aa)) folds into the MsrB domain. Zn(2+)-binding residues include Cys52, Cys55, Cys101, and Cys104. Cys124 functions as the Nucleophile in the catalytic mechanism.

It belongs to the MsrB Met sulfoxide reductase family. It depends on Zn(2+) as a cofactor.

It catalyses the reaction L-methionyl-[protein] + [thioredoxin]-disulfide + H2O = L-methionyl-(R)-S-oxide-[protein] + [thioredoxin]-dithiol. This chain is Peptide methionine sulfoxide reductase MsrB, found in Synechococcus sp. (strain RCC307).